The primary structure comprises 356 residues: Alanine racemase, catabolic (356 aa).

The active-site Proton acceptor; specific for D-alanine is K35. K35 carries the N6-(pyridoxal phosphate)lysine modification. R130 contributes to the substrate binding site. The active-site Proton acceptor; specific for L-alanine is the Y253. M301 is a binding site for substrate.

This sequence belongs to the alanine racemase family. Requires pyridoxal 5'-phosphate as cofactor.

The catalysed reaction is L-alanine = D-alanine. Functionally, isomerizes L-alanine to D-alanine which is then oxidized to pyruvate by DadA. This Escherichia coli O157:H7 protein is Alanine racemase, catabolic (dadX).